A 574-amino-acid polypeptide reads, in one-letter code: Egalitarian protein homolog (574 aa).

Residues 259 to 278 (LNEDGSENGSDEGEETNNNG) form a disordered region. Acidic residues predominate over residues 262–273 (DGSENGSDEGEE). One can recognise a 3'-5' exonuclease domain in the interval 312–414 (NMEKKVVGLD…SLLQHEKFNK (103 aa)).

Component of a dynein-regulating complex composed of at least bicd-1, dlc-1 and egal-1.

It is found in the nucleus envelope. Part of a complex with bicd-1 and dlc-1, which is recruited to the nuclear envelope by unc-83, where in turn, it recruits dynein to the nuclear surface and regulates nuclear migration in hypodermal precursor cells. The chain is Egalitarian protein homolog from Caenorhabditis elegans.